The primary structure comprises 181 residues: BURP domain-containing protein 7 (181 aa).

An N-terminal signal peptide occupies residues 1-21; that stretch reads MARSLAALLLLLVAAAGDSHA. The 117-residue stretch at 65-181 folds into the BURP domain; it reads FFLEKDLFPG…RRGRRTGWRP (117 aa). A disordered region spans residues 112–181; sequence QLSVPAGSPA…RRGRRTGWRP (70 aa). Basic residues predominate over residues 128 to 143; sequence RPRRSPARRSNARRRS. Positions 144–157 are enriched in low complexity; sequence SPWWSSPRPASAPA. The segment covering 170–181 has biased composition (basic residues); sequence GRRRGRRTGWRP.

In terms of tissue distribution, expressed in roots, stems, leaves and shoot.

In Oryza sativa subsp. japonica (Rice), this protein is BURP domain-containing protein 7 (BURP7).